Consider the following 307-residue polypeptide: Holliday junction branch migration complex subunit RuvB (307 aa).

The segment at 1–167 (MKLQIKPPNT…FGVILNINYY (167 aa)) is large ATPase domain (RuvB-L). ATP is bound by residues isoleucine 5, glycine 48, lysine 51, threonine 52, threonine 53, arginine 157, tyrosine 167, and arginine 204. Threonine 52 is a binding site for Mg(2+). Residues 168-233 (SNAEIEKMVS…DLEGLFKNLM (66 aa)) form a small ATPAse domain (RuvB-S) region. The head domain (RuvB-H) stretch occupies residues 236–307 (KNGLQSIDVQ…NSGREYLVNF (72 aa)). DNA contacts are provided by arginine 270, lysine 289, and arginine 294.

It belongs to the RuvB family. As to quaternary structure, homohexamer. Forms an RuvA(8)-RuvB(12)-Holliday junction (HJ) complex. HJ DNA is sandwiched between 2 RuvA tetramers; dsDNA enters through RuvA and exits via RuvB. An RuvB hexamer assembles on each DNA strand where it exits the tetramer. Each RuvB hexamer is contacted by two RuvA subunits (via domain III) on 2 adjacent RuvB subunits; this complex drives branch migration. In the full resolvosome a probable DNA-RuvA(4)-RuvB(12)-RuvC(2) complex forms which resolves the HJ.

The protein localises to the cytoplasm. It catalyses the reaction ATP + H2O = ADP + phosphate + H(+). In terms of biological role, the RuvA-RuvB-RuvC complex processes Holliday junction (HJ) DNA during genetic recombination and DNA repair, while the RuvA-RuvB complex plays an important role in the rescue of blocked DNA replication forks via replication fork reversal (RFR). RuvA specifically binds to HJ cruciform DNA, conferring on it an open structure. The RuvB hexamer acts as an ATP-dependent pump, pulling dsDNA into and through the RuvAB complex. RuvB forms 2 homohexamers on either side of HJ DNA bound by 1 or 2 RuvA tetramers; 4 subunits per hexamer contact DNA at a time. Coordinated motions by a converter formed by DNA-disengaged RuvB subunits stimulates ATP hydrolysis and nucleotide exchange. Immobilization of the converter enables RuvB to convert the ATP-contained energy into a lever motion, pulling 2 nucleotides of DNA out of the RuvA tetramer per ATP hydrolyzed, thus driving DNA branch migration. The RuvB motors rotate together with the DNA substrate, which together with the progressing nucleotide cycle form the mechanistic basis for DNA recombination by continuous HJ branch migration. Branch migration allows RuvC to scan DNA until it finds its consensus sequence, where it cleaves and resolves cruciform DNA. The chain is Holliday junction branch migration complex subunit RuvB from Mycoplasma genitalium (strain ATCC 33530 / DSM 19775 / NCTC 10195 / G37) (Mycoplasmoides genitalium).